The primary structure comprises 697 residues: Trishanku (697 aa).

The disordered stretch occupies residues 1–94; the sequence is MEIEPVVRIS…NNNSNSNGTD (94 aa). Residues 12-47 show a composition bias toward low complexity; the sequence is NGNNNQNNNNNNNNNTNNNSNNNNNNNNSSNINSTN. The span at 58–72 shows a compositional bias: polar residues; sequence KMISNINNQKSPNPL. Positions 73-91 are enriched in low complexity; that stretch reads NSSVDDNNNTNNNNNSNSN. Residues 122 to 189 enclose the BTB domain; sequence SDVIFKVGDR…ICIGILDLDY (68 aa). A disordered region spans residues 311–455; it reads IQQQQQQQQQ…DSANDDYEYS (145 aa). Residues 312 to 331 show a composition bias toward low complexity; it reads QQQQQQQQQQLQSANGASGK. Basic residues predominate over residues 332–344; that stretch reads SHGKRSSSSHLKK. A compositionally biased stretch (low complexity) spans 353-363; it reads GSCSSRCSSRR. Residues 416–453 show a composition bias toward acidic residues; the sequence is DDFENDSEDGDDDDEDDDEDDDFTDDDDKDDSANDDYE.

Expressed strongly in presumptive spore (prespore or psp) cells during the late G2 phase of cell cycle. Present at a low level in vegetative cells.

In terms of biological role, required for normal morphogenesis and cell-type stability. This is Trishanku (triA) from Dictyostelium discoideum (Social amoeba).